The primary structure comprises 315 residues: Methionyl-tRNA formyltransferase (315 aa).

The N-terminal domain stretch occupies residues 2–189; sequence SESLRIIFAG…LITTLKQLAD (188 aa). 113-116 contacts (6S)-5,6,7,8-tetrahydrofolate; it reads SLLP. Positions 210–315 are C-terminal domain; the sequence is KEEARIDWSL…EWFVPGNRLA (106 aa).

Belongs to the Fmt family.

The enzyme catalyses L-methionyl-tRNA(fMet) + (6R)-10-formyltetrahydrofolate = N-formyl-L-methionyl-tRNA(fMet) + (6S)-5,6,7,8-tetrahydrofolate + H(+). Functionally, attaches a formyl group to the free amino group of methionyl-tRNA(fMet). The formyl group appears to play a dual role in the initiator identity of N-formylmethionyl-tRNA by promoting its recognition by IF2 and preventing the misappropriation of this tRNA by the elongation apparatus. This is Methionyl-tRNA formyltransferase from Escherichia coli O6:H1 (strain CFT073 / ATCC 700928 / UPEC).